An 84-amino-acid chain; its full sequence is Small ribosomal subunit protein bS18 (84 aa).

The protein belongs to the bacterial ribosomal protein bS18 family. As to quaternary structure, part of the 30S ribosomal subunit. Forms a tight heterodimer with protein bS6.

Functionally, binds as a heterodimer with protein bS6 to the central domain of the 16S rRNA, where it helps stabilize the platform of the 30S subunit. The protein is Small ribosomal subunit protein bS18 of Mycobacterium leprae (strain Br4923).